The sequence spans 180 residues: ATP-dependent protease subunit HslV (180 aa).

The active site involves threonine 7. Na(+) contacts are provided by glycine 163, cysteine 166, and threonine 169.

Belongs to the peptidase T1B family. HslV subfamily. In terms of assembly, a double ring-shaped homohexamer of HslV is capped on each side by a ring-shaped HslU homohexamer. The assembly of the HslU/HslV complex is dependent on binding of ATP.

It localises to the cytoplasm. The catalysed reaction is ATP-dependent cleavage of peptide bonds with broad specificity.. With respect to regulation, allosterically activated by HslU binding. Its function is as follows. Protease subunit of a proteasome-like degradation complex believed to be a general protein degrading machinery. In Alcanivorax borkumensis (strain ATCC 700651 / DSM 11573 / NCIMB 13689 / SK2), this protein is ATP-dependent protease subunit HslV.